Reading from the N-terminus, the 417-residue chain is Candidapepsin-4 (417 aa).

The N-terminal stretch at 1 to 18 (MFLQNILSVLAFALLIDA) is a signal peptide. The propeptide at 19–75 (APVKRSTGFVTLDFNVKRSLVDPKDPTVEVKRSPLFLDIEPTEIPVDDTGRNDVGKR) is activation peptide. The Peptidase A1 domain maps to 89 to 403 (YSADITIGSN…DLDDRKISMA (315 aa)). The active site involves aspartate 107. The cysteines at positions 122 and 134 are disulfide-linked. Asparagine 137 carries an N-linked (GlcNAc...) asparagine glycan. Residue aspartate 293 is part of the active site. A disulfide bridge links cysteine 331 with cysteine 369.

It belongs to the peptidase A1 family. O-glycosylated.

The protein localises to the secreted. It catalyses the reaction Preferential cleavage at the carboxyl of hydrophobic amino acids, but fails to cleave 15-Leu-|-Tyr-16, 16-Tyr-|-Leu-17 and 24-Phe-|-Phe-25 of insulin B chain. Activates trypsinogen, and degrades keratin.. This is Candidapepsin-4 (SAP4) from Candida albicans (strain WO-1) (Yeast).